A 174-amino-acid chain; its full sequence is UPF0200 protein PAE1629 (174 aa).

9–16 (GLPGSGKT) is an ATP binding site.

It belongs to the UPF0200 family.

The protein is UPF0200 protein PAE1629 of Pyrobaculum aerophilum (strain ATCC 51768 / DSM 7523 / JCM 9630 / CIP 104966 / NBRC 100827 / IM2).